The chain runs to 902 residues: Transcription factor E2F7 (902 aa).

Residue serine 96 is modified to Phosphoserine. A DNA-binding region spans residues 143–212 (RKQKSLGLLC…VAKNQYGWHG (70 aa)). Basic and acidic residues predominate over residues 253–269 (ERRKDGSPDPRDQHLLD). Positions 253–283 (ERRKDGSPDPRDQHLLDFSESDYPSSSANSR) are disordered. A DNA-binding region spans residues 283–368 (RKDKSLRIMS…GRKPAFKWIG (86 aa)). Serine 411 carries the post-translational modification Phosphoserine. Disordered stretches follow at residues 418-439 (SEKI…KQGP), 589-627 (LCEE…SNST), and 665-690 (NGFI…DNEI). Composition is skewed to basic and acidic residues over residues 589–611 (LCEE…REFE) and 679–690 (PDTEKSSNDNEI). At serine 832 the chain carries Phosphoserine. The disordered stretch occupies residues 844–902 (KAEQSPAPATPKSIQRRHRETFFKTPGSLGDPAFRRERNQSRNTSSAQRRLEISSSGPD). Polar residues predominate over residues 884-902 (SRNTSSAQRRLEISSSGPD).

Belongs to the E2F/DP family. In terms of assembly, homodimer and heterodimer: mainly forms homodimers and, to a lesser extent, heterodimers with E2F8. Dimerization is important for DNA-binding. Interacts with HIF1A. Interacts with MN1.

It localises to the nucleus. In terms of biological role, atypical E2F transcription factor that participates in various processes such as angiogenesis, polyploidization of specialized cells and DNA damage response. Mainly acts as a transcription repressor that binds DNA independently of DP proteins and specifically recognizes the E2 recognition site 5'-TTTC[CG]CGC-3'. Directly represses transcription of classical E2F transcription factors such as E2F1. Acts as a regulator of S-phase by recognizing and binding the E2-related site 5'-TTCCCGCC-3' and mediating repression of G1/S-regulated genes. Plays a key role in polyploidization of cells in placenta and liver by regulating the endocycle, probably by repressing genes promoting cytokinesis and antagonizing action of classical E2F proteins (E2F1, E2F2 and/or E2F3). Required for placental development by promoting polyploidization of trophoblast giant cells. Also involved in DNA damage response: up-regulated by p53/TP53 following genotoxic stress and acts as a downstream effector of p53/TP53-dependent repression by mediating repression of indirect p53/TP53 target genes involved in DNA replication. Acts as a promoter of sprouting angiogenesis, possibly by acting as a transcription activator: associates with HIF1A, recognizes and binds the VEGFA promoter, which is different from canonical E2 recognition site, and activates expression of the VEGFA gene. Acts as a negative regulator of keratinocyte differentiation. In Rattus norvegicus (Rat), this protein is Transcription factor E2F7 (E2f7).